The following is a 609-amino-acid chain: Sporulation-specific protein 21 (609 aa).

Disordered regions lie at residues 1–50, 68–96, and 124–165; these read MDNI…LENS, PASKSSRSIGSMKSNQSLVSMKSSDDGNS, and KLDS…SIKG. Polar residues predominate over residues 10 to 31; the sequence is MEGTSTMTVTSRSSEDSSCISN. Residues 32 to 43 show a composition bias toward basic and acidic residues; it reads HEQDTDTHKDGD. Residues 68–81 show a composition bias toward low complexity; that stretch reads PASKSSRSIGSMKS. 2 stretches are compositionally biased toward polar residues: residues 82-96 and 127-136; these read NQSLVSMKSSDDGNS and STGSQRSKNN. A compositionally biased stretch (low complexity) spans 143-159; the sequence is SSTTSQTTCSSSSSSSS. 3 coiled-coil regions span residues 283–342, 357–393, and 424–483; these read RTKI…DNES, RETLDRVNREQQLIIDQNEFLKKSVNELQNEVNATNF, and ENLT…LLIE. The tract at residues 586 to 609 is disordered; that stretch reads DQKSNQNSSTPYKQSQRQVPHSIK. Positions 587-609 are enriched in polar residues; sequence QKSNQNSSTPYKQSQRQVPHSIK.

It belongs to the MPC70 family. In terms of assembly, interacts directly with MPC54, NUD1 and SPC42. Interacts with ADY3. Interacts with ADY4. Probable component of a SPB complex composed of ADY3, SSP1, DON1, MPC54, SPO21/MPC70, NUD1 and CNM67.

Its subcellular location is the prospore membrane. The protein resides in the cytoplasm. It localises to the cytoskeleton. It is found in the spindle pole. Its function is as follows. Involved in the pathway that organizes the shaping and sizing of the prospore membrane (PSM) during sporulation. May provide a meiosis-specific scaffold for the assembly of other proteins on spindle pole bodies (SPBs), and may be a limiting component for SPB formation. The protein is Sporulation-specific protein 21 (SPO21) of Saccharomyces cerevisiae (strain ATCC 204508 / S288c) (Baker's yeast).